A 469-amino-acid chain; its full sequence is Uronate isomerase (469 aa).

It belongs to the metallo-dependent hydrolases superfamily. Uronate isomerase family.

The catalysed reaction is D-glucuronate = D-fructuronate. It carries out the reaction aldehydo-D-galacturonate = keto-D-tagaturonate. The protein operates within carbohydrate metabolism; pentose and glucuronate interconversion. The sequence is that of Uronate isomerase from Corynebacterium efficiens (strain DSM 44549 / YS-314 / AJ 12310 / JCM 11189 / NBRC 100395).